The primary structure comprises 409 residues: Pleckstrin homology domain-containing family O member 1 (409 aa).

The interval 1 to 20 (MMKKNNSTKRGPQDGNHQCA) is disordered. Positions 21–132 (PPEKVGWVRK…WINALNSAIT (112 aa)) constitute a PH domain. The interaction with capping proteins (CPs) stretch occupies residues 133–193 (RAKNRVLDEV…MLTLDLIQEE (61 aa)). The interval 136–308 (NRVLDEVTVE…PHAPGQLSRI (173 aa)) is interaction with ATM, CKIP, IFP35 and NMI. 3 disordered regions span residues 218–304 (LAGS…APGQ), 325–350 (EVQGLGDGKRKAKEPPRSPPDSESEQ), and 390–409 (TPDSHLRQTTQHSQYRKSLM). A phosphoserine mark is found at Ser-227 and Ser-271. A negative regulator of AP-1 activity region spans residues 308–409 (IQDLVARKLE…QHSQYRKSLM (102 aa)). Residues 331–340 (DGKRKAKEPP) are compositionally biased toward basic and acidic residues. Residue Ser-342 is modified to Phosphoserine. Residues 390–402 (TPDSHLRQTTQHS) show a composition bias toward polar residues.

In terms of assembly, heterodimer or homodimer. Interacts with CK2 and actin capping subunits (capping protein CP-alpha and CP-beta). CKIP1 and CK2 together inhibit the activity of actin capping protein at the barbed ends of actin filaments. Interacts with ATM, IFP35, JUN, JUND, NMI and PI3K. Interacts with AKT1, AKT2 and AKT3 (each isozyme of PKB), PtdIns(3,5)P2, PtdIns(4,5)P2 and PtdIns(3,4,5)P2. Post-translationally, C-terminal fragments could be released during apoptosis via caspase-3-dependent cleavage.

Its subcellular location is the membrane. It localises to the nucleus. The protein localises to the cytoplasm. Its function is as follows. Plays a role in the regulation of the actin cytoskeleton through its interactions with actin capping protein (CP). May function to target CK2 to the plasma membrane thereby serving as an adapter to facilitate the phosphorylation of CP by protein kinase 2 (CK2). Appears to target ATM to the plasma membrane. Also implicated in PI3K-regulated muscle differentiation, the regulation of AP-1 activity (plasma membrane bound AP-1 regulator that translocates to the nucleus) and the promotion of apoptosis induced by tumor necrosis factor TNF. When bound to PKB, it inhibits it probably by decreasing PKB level of phosphorylation. The chain is Pleckstrin homology domain-containing family O member 1 (PLEKHO1) from Bos taurus (Bovine).